A 280-amino-acid polypeptide reads, in one-letter code: 2-dehydro-3-deoxyphosphooctonate aldolase (280 aa).

The protein belongs to the KdsA family.

Its subcellular location is the cytoplasm. It catalyses the reaction D-arabinose 5-phosphate + phosphoenolpyruvate + H2O = 3-deoxy-alpha-D-manno-2-octulosonate-8-phosphate + phosphate. Its pathway is carbohydrate biosynthesis; 3-deoxy-D-manno-octulosonate biosynthesis; 3-deoxy-D-manno-octulosonate from D-ribulose 5-phosphate: step 2/3. It functions in the pathway bacterial outer membrane biogenesis; lipopolysaccharide biosynthesis. The sequence is that of 2-dehydro-3-deoxyphosphooctonate aldolase from Neisseria meningitidis serogroup B (strain ATCC BAA-335 / MC58).